The chain runs to 311 residues: uncharacterized protein (311 aa).

10 helical membrane-spanning segments follow: residues 13 to 33 (STAV…GFFS), 41 to 61 (FELV…CWLA), 76 to 96 (LQTL…FKSF), 103 to 123 (IAIS…SFFY), 128 to 148 (NVIS…ISGI), 157 to 177 (LMGS…FTTL), 192 to 212 (FLQT…GAFA), 218 to 238 (NWIM…LLFF), 248 to 268 (FISI…TVFT), and 272 to 292 (PDLY…LTLV). 2 consecutive EamA domains span residues 24–147 (VIFG…LISG) and 166–292 (VLAA…LTLV).

Belongs to the EamA transporter family.

It is found in the cell membrane. This is an uncharacterized protein from Bacillus subtilis (strain 168).